Here is a 344-residue protein sequence, read N- to C-terminus: N-acetyl-gamma-glutamyl-phosphate reductase (344 aa).

Cysteine 150 is a catalytic residue.

It belongs to the NAGSA dehydrogenase family. Type 1 subfamily.

The protein localises to the cytoplasm. It carries out the reaction N-acetyl-L-glutamate 5-semialdehyde + phosphate + NADP(+) = N-acetyl-L-glutamyl 5-phosphate + NADPH + H(+). The protein operates within amino-acid biosynthesis; L-arginine biosynthesis; N(2)-acetyl-L-ornithine from L-glutamate: step 3/4. Its function is as follows. Catalyzes the NADPH-dependent reduction of N-acetyl-5-glutamyl phosphate to yield N-acetyl-L-glutamate 5-semialdehyde. The protein is N-acetyl-gamma-glutamyl-phosphate reductase of Pseudomonas entomophila (strain L48).